The primary structure comprises 312 residues: Plasma membrane-associated coenzyme Q6 reductase PGA3 (312 aa).

Residues 1 to 15 lie on the Extracellular side of the membrane; that stretch reads MSKEDIEGTNILDEP. Residues 16–36 form a helical membrane-spanning segment; sequence VHGIYIPAALFVVGVAITTYM. The Cytoplasmic portion of the chain corresponds to 37–39; that stretch reads SGE. A helical transmembrane segment spans residues 40 to 60; it reads LKILWSLPILFMIIFVRAYSA. Residues 61-179 are Extracellular-facing; the sequence is YKRRRSLYPD…LNYEPNSSKH (119 aa). Residues 70–173 form the FAD-binding FR-type domain; the sequence is DRWTSLELED…KGPIGTLNYE (104 aa). FAD is bound by residues 153 to 168 and 179 to 211; these read AGLN…GPIG and HLGI…KVSL. Residues 180–200 form a helical membrane-spanning segment; the sequence is LGIVAGGSGITPVLQILNEII. Residues 201–312 lie on the Cytoplasmic side of the membrane; that stretch reads TVPEDLTKVS…SSGDDQVFVF (112 aa).

The protein belongs to the flavoprotein pyridine nucleotide cytochrome reductase family. It depends on FAD as a cofactor.

It localises to the cell membrane. The protein resides in the endoplasmic reticulum membrane. The enzyme catalyses 2 Fe(III)-[cytochrome b5] + NADH = 2 Fe(II)-[cytochrome b5] + NAD(+) + H(+). With respect to regulation, inhibited by diphenylene iodonium (DPI). Functionally, NADH-dependent cytochrome b5 reductase that reduces coenzyme Q6 at the plasma membrane and mediates lifespan extension by calorie restriction by shifting fermentative to respiratory metabolism, probably through modulating the NAD(+)/NADH ratio. The polypeptide is Plasma membrane-associated coenzyme Q6 reductase PGA3 (PGA3) (Saccharomyces cerevisiae (strain ATCC 204508 / S288c) (Baker's yeast)).